The chain runs to 237 residues: Regulator of G-protein signaling 9-binding protein (237 aa).

Residues 1–212 (MAREECKALL…ERAGPCDPSK (212 aa)) lie on the Cytoplasmic side of the membrane. The stretch at 30–54 (SADTQDLREELQKTRQKARELAVAT) forms a coiled coil. Positions 153–202 (EVLQVGEMIDDMEMKVNVPRWTVQARQAAGAELLSGASAGASSAGGISVE) are SNARE-like. Residues 213-233 (ALAATVFSAVLLVAVALALCV) traverse the membrane as a helical; Anchor for type IV membrane protein segment. The Extracellular portion of the chain corresponds to 234 to 237 (AKLS).

It belongs to the RGS7BP/RGS9BP family. Specifically interacts with isoform RGS9-1 of RGS9. Interaction is decreased when RGS9-1 is phosphorylated at 'Ser-475'. Component of the RGS9-1-Gbeta5 complex composed of RGS9-1, Gbeta5 (GNB5) and RGS9BP. Predominantly expressed in photoreceptors of the retina. Weakly expressed in other areas of the central nervous system.

It is found in the membrane. Its function is as follows. Regulator of G protein-coupled receptor (GPCR) signaling in phototransduction. Participates in the recovery phase of visual transduction via its interaction with RGS9-1 isoform. Acts as a membrane-anchor that mediates the targeting of RGS9-1 to the photoreceptor outer segment, where phototransduction takes place. Enhances the ability of RGS9-1 to stimulate G protein GTPase activity, allowing the visual signal to be terminated on the physiologically time scale. It also controls the proteolytic stability of RGS9-1, probably by protecting it from degradation. The protein is Regulator of G-protein signaling 9-binding protein (Rgs9bp) of Mus musculus (Mouse).